The chain runs to 379 residues: UDP-N-acetylglucosamine--N-acetylmuramyl-(pentapeptide) pyrophosphoryl-undecaprenol N-acetylglucosamine transferase (379 aa).

Residues 10–12 (TAG), asparagine 124, arginine 161, serine 195, and glutamine 291 contribute to the UDP-N-acetyl-alpha-D-glucosamine site.

The protein belongs to the glycosyltransferase 28 family. MurG subfamily.

Its subcellular location is the cell membrane. The enzyme catalyses di-trans,octa-cis-undecaprenyl diphospho-N-acetyl-alpha-D-muramoyl-L-alanyl-D-glutamyl-meso-2,6-diaminopimeloyl-D-alanyl-D-alanine + UDP-N-acetyl-alpha-D-glucosamine = di-trans,octa-cis-undecaprenyl diphospho-[N-acetyl-alpha-D-glucosaminyl-(1-&gt;4)]-N-acetyl-alpha-D-muramoyl-L-alanyl-D-glutamyl-meso-2,6-diaminopimeloyl-D-alanyl-D-alanine + UDP + H(+). The protein operates within cell wall biogenesis; peptidoglycan biosynthesis. Cell wall formation. Catalyzes the transfer of a GlcNAc subunit on undecaprenyl-pyrophosphoryl-MurNAc-pentapeptide (lipid intermediate I) to form undecaprenyl-pyrophosphoryl-MurNAc-(pentapeptide)GlcNAc (lipid intermediate II). The protein is UDP-N-acetylglucosamine--N-acetylmuramyl-(pentapeptide) pyrophosphoryl-undecaprenol N-acetylglucosamine transferase of Thermobifida fusca (strain YX).